The primary structure comprises 105 residues: BLOC-1-related complex subunit 7 (105 aa).

Belongs to the BORCS7 family. As to quaternary structure, component of the BLOC-one-related complex (BORC) which is composed of BLOC1S1, BLOC1S2, BORCS5, BORCS6, BORCS7, BORCS8, KXD1 and SNAPIN.

Its subcellular location is the lysosome membrane. As part of the BORC complex may play a role in lysosomes movement and localization at the cell periphery. Associated with the cytosolic face of lysosomes, the BORC complex may recruit ARL8B and couple lysosomes to microtubule plus-end-directed kinesin motor. The polypeptide is BLOC-1-related complex subunit 7 (Mus musculus (Mouse)).